The sequence spans 310 residues: GPN-loop GTPase 2 (310 aa).

Alanine 2 is modified (N-acetylalanine). 19–24 contributes to the GTP binding site; that stretch reads GSGKTT. A Gly-Pro-Asn (GPN)-loop; involved in dimer interface motif is present at residues 76–78; it reads GPN. 178–181 contributes to the GTP binding site; sequence SKMD.

It belongs to the GPN-loop GTPase family. As to quaternary structure, heterodimers with GPN1 or GPN3. Binds to RNA polymerase II (RNAPII).

Its function is as follows. Small GTPase required for proper localization of RNA polymerase II and III (RNAPII and RNAPIII). May act at an RNAP assembly step prior to nuclear import. The sequence is that of GPN-loop GTPase 2 from Sus scrofa (Pig).